The chain runs to 248 residues: tRNA (guanine-N(1)-)-methyltransferase (248 aa).

Residues Gly-113 and 133–138 (IGDYVL) each bind S-adenosyl-L-methionine.

This sequence belongs to the RNA methyltransferase TrmD family. As to quaternary structure, homodimer.

Its subcellular location is the cytoplasm. It carries out the reaction guanosine(37) in tRNA + S-adenosyl-L-methionine = N(1)-methylguanosine(37) in tRNA + S-adenosyl-L-homocysteine + H(+). Its function is as follows. Specifically methylates guanosine-37 in various tRNAs. This Shewanella halifaxensis (strain HAW-EB4) protein is tRNA (guanine-N(1)-)-methyltransferase.